Here is a 190-residue protein sequence, read N- to C-terminus: GTP cyclohydrolase 1 (190 aa).

Zn(2+) is bound by residues Cys-78, His-81, and Cys-150.

This sequence belongs to the GTP cyclohydrolase I family. In terms of assembly, toroid-shaped homodecamer, composed of two pentamers of five dimers.

The catalysed reaction is GTP + H2O = 7,8-dihydroneopterin 3'-triphosphate + formate + H(+). It participates in cofactor biosynthesis; 7,8-dihydroneopterin triphosphate biosynthesis; 7,8-dihydroneopterin triphosphate from GTP: step 1/1. With respect to regulation, k(+) ions moderately increases the Vmax, whereas UTP and Ca(2+) and Mg(2+) ions drastically increase the Km for GTP. In Bacillus subtilis (strain 168), this protein is GTP cyclohydrolase 1 (folE).